The sequence spans 282 residues: Putative lactoylglutathione lyase (282 aa).

At A2 the chain carries N-acetylalanine. VOC domains lie at 17 to 141 (RFLH…LIQR) and 147 to 274 (PLCQ…LVDN). Position 20 (H20) interacts with Zn(2+). Substrate is bound at residue R24. E71 lines the Zn(2+) pocket. 2 residues coordinate substrate: N75 and H89. Residues H89 and E137 each contribute to the Zn(2+) site. E137 acts as the Proton donor/acceptor in catalysis. 254-255 (LG) lines the substrate pocket.

This sequence belongs to the glyoxalase I family. Requires Zn(2+) as cofactor.

The catalysed reaction is (R)-S-lactoylglutathione = methylglyoxal + glutathione. It participates in secondary metabolite metabolism; methylglyoxal degradation; (R)-lactate from methylglyoxal: step 1/2. Functionally, catalyzes the conversion of hemimercaptal, formed from methylglyoxal and glutathione, to S-lactoylglutathione. In Brassica oleracea var. gemmifera (Brussel sprouts), this protein is Putative lactoylglutathione lyase.